Here is a 251-residue protein sequence, read N- to C-terminus: E3 ubiquitin-protein ligase MARCHF3 (251 aa).

The segment at 61 to 121 adopts an RING-CH-type zinc-finger fold; the sequence is QSFNDRPMCR…ELCHFRFSVE (61 aa). Cys-69, Cys-72, Cys-85, Cys-87, His-95, Cys-98, Cys-111, and Cys-114 together coordinate Zn(2+). A run of 2 helical transmembrane segments spans residues 143–163 and 180–200; these read LFGD…SGWL and AVGL…WTLV.

It localises to the cytoplasmic vesicle membrane. Its subcellular location is the early endosome membrane. It carries out the reaction S-ubiquitinyl-[E2 ubiquitin-conjugating enzyme]-L-cysteine + [acceptor protein]-L-lysine = [E2 ubiquitin-conjugating enzyme]-L-cysteine + N(6)-ubiquitinyl-[acceptor protein]-L-lysine.. The protein operates within protein modification; protein ubiquitination. E3 ubiquitin-protein ligase which may be involved in endosomal trafficking. E3 ubiquitin ligases accept ubiquitin from an E2 ubiquitin-conjugating enzyme in the form of a thioester and then directly transfer the ubiquitin to targeted substrates. The polypeptide is E3 ubiquitin-protein ligase MARCHF3 (marchf3) (Xenopus tropicalis (Western clawed frog)).